A 358-amino-acid polypeptide reads, in one-letter code: Phosphoribosylformylglycinamidine cyclo-ligase (358 aa).

The protein belongs to the AIR synthase family.

It localises to the cytoplasm. It catalyses the reaction 2-formamido-N(1)-(5-O-phospho-beta-D-ribosyl)acetamidine + ATP = 5-amino-1-(5-phospho-beta-D-ribosyl)imidazole + ADP + phosphate + H(+). It functions in the pathway purine metabolism; IMP biosynthesis via de novo pathway; 5-amino-1-(5-phospho-D-ribosyl)imidazole from N(2)-formyl-N(1)-(5-phospho-D-ribosyl)glycinamide: step 2/2. In Chromohalobacter salexigens (strain ATCC BAA-138 / DSM 3043 / CIP 106854 / NCIMB 13768 / 1H11), this protein is Phosphoribosylformylglycinamidine cyclo-ligase.